A 382-amino-acid chain; its full sequence is ATP phosphoribosyltransferase regulatory subunit (382 aa).

Belongs to the class-II aminoacyl-tRNA synthetase family. HisZ subfamily. In terms of assembly, heteromultimer composed of HisG and HisZ subunits.

Its subcellular location is the cytoplasm. It participates in amino-acid biosynthesis; L-histidine biosynthesis; L-histidine from 5-phospho-alpha-D-ribose 1-diphosphate: step 1/9. Functionally, required for the first step of histidine biosynthesis. May allow the feedback regulation of ATP phosphoribosyltransferase activity by histidine. The sequence is that of ATP phosphoribosyltransferase regulatory subunit from Burkholderia vietnamiensis (strain G4 / LMG 22486) (Burkholderia cepacia (strain R1808)).